We begin with the raw amino-acid sequence, 292 residues long: Release factor glutamine methyltransferase (292 aa).

S-adenosyl-L-methionine-binding positions include glycine 126–glycine 130, aspartate 157, tryptophan 184, and asparagine 198. A substrate-binding site is contributed by asparagine 198 to tyrosine 201.

The protein belongs to the protein N5-glutamine methyltransferase family. PrmC subfamily.

The enzyme catalyses L-glutaminyl-[peptide chain release factor] + S-adenosyl-L-methionine = N(5)-methyl-L-glutaminyl-[peptide chain release factor] + S-adenosyl-L-homocysteine + H(+). Methylates the class 1 translation termination release factors RF1/PrfA and RF2/PrfB on the glutamine residue of the universally conserved GGQ motif. This Haemophilus influenzae (strain ATCC 51907 / DSM 11121 / KW20 / Rd) protein is Release factor glutamine methyltransferase.